A 53-amino-acid chain; its full sequence is Large ribosomal subunit protein bL32c (53 aa).

The protein belongs to the bacterial ribosomal protein bL32 family.

It localises to the plastid. The protein localises to the chloroplast. The sequence is that of Large ribosomal subunit protein bL32c from Phaseolus vulgaris (Kidney bean).